Here is a 117-residue protein sequence, read N- to C-terminus: Minor capsid protein VP2 (117 aa).

This sequence belongs to the lagovirus VP2 protein family. As to quaternary structure, homooligomer. The portal-like structure consists in 12 copies of VP2. Interacts with capsid protein VP1.

The protein resides in the virion. Its subcellular location is the host cytoplasm. Functionally, minor structural protein that forms a portal-like structure at a unique three-fold axis of symmetry, following binding to the host receptor. The channel formed by VP2 may allow the delivery of the viral genome through the host endosomal membrane. The chain is Minor capsid protein VP2 from Rabbit hemorrhagic disease virus (strain AST89) (Ra/LV/RHDV/AST89/1989/SP).